The chain runs to 1608 residues: Mitogen-activated protein kinase kinase kinase 4 (1608 aa).

Over residues 1-23 (MREAAAALVPPPAFAVTPAAAME) the composition is skewed to low complexity. Disordered regions lie at residues 1–136 (MREA…ENVE) and 429–478 (IPSP…RQPI). A compositionally biased stretch (pro residues) spans 24–37 (EPPPPPPPPPPPPE). Over residues 66 to 76 (SDLEDFSDETN) the composition is skewed to acidic residues. A Phosphoserine modification is found at Ser-84. Basic residues predominate over residues 91–101 (QMKRMSTKHQR). At Ser-431 the chain carries Phosphoserine. A Phosphothreonine modification is found at Thr-447. Residues Ser-456 and Ser-457 each carry the phosphoserine modification. Acidic residues predominate over residues 456-466 (SSTDESEEEQI). The residue at position 458 (Thr-458) is a Phosphothreonine. Ser-461, Ser-481, and Ser-499 each carry phosphoserine. Disordered regions lie at residues 1157–1190 (CHSD…GSPA), 1202–1231 (ASRP…SVPE), and 1244–1274 (FRSL…TRRS). Positions 1217-1230 (SISSAHDTRGSSVP) are enriched in polar residues. 2 positions are modified to phosphoserine: Ser-1252 and Ser-1274. Over residues 1252–1261 (SPTEERDEPA) the composition is skewed to basic and acidic residues. The region spanning 1343-1601 (WQRGNKIGEG…ASQLLDHSFV (259 aa)) is the Protein kinase domain. Residues 1349-1357 (IGEGQYGKV) and Lys-1372 contribute to the ATP site. Catalysis depends on Asp-1463, which acts as the Proton acceptor.

This sequence belongs to the protein kinase superfamily. STE Ser/Thr protein kinase family. MAP kinase kinase kinase subfamily. Monomer and homodimer. Homodimerization enhances kinase activity. Interacts with TRAF4; this promotes homodimerization. Binds both upstream activators and downstream substrates in multimolecular complexes. Interacts with AXIN1 and DIXDC1; interaction with DIXDC1 prevents interaction with AXIN1. Interacts with GADD45 and MAP2K6. Interacts with ZFP36; this interaction enhances the association with SH3KBP1/CIN85. Interacts with SH3KBP1; this interaction enhances the association with ZFP36. Interacts with CDC42. Requires Mg(2+) as cofactor. In terms of tissue distribution, expressed at high levels in heart, placenta, skeletal muscle and pancreas, and at lower levels in other tissues.

The protein localises to the cytoplasm. It is found in the perinuclear region. The enzyme catalyses L-seryl-[protein] + ATP = O-phospho-L-seryl-[protein] + ADP + H(+). The catalysed reaction is L-threonyl-[protein] + ATP = O-phospho-L-threonyl-[protein] + ADP + H(+). Its activity is regulated as follows. N-terminal autoinhibitory domain interacts with the C-terminal kinase domain, inhibiting kinase activity, and preventing interaction with its substrate, MAP2K6. The GADD45 proteins activate the kinase by binding to the N-terminal domain. Activated by phosphorylation on Thr-1505. In terms of biological role, component of a protein kinase signal transduction cascade. Activates the CSBP2, P38 and JNK MAPK pathways, but not the ERK pathway. Specifically phosphorylates and activates MAP2K4 and MAP2K6. The sequence is that of Mitogen-activated protein kinase kinase kinase 4 (MAP3K4) from Homo sapiens (Human).